The primary structure comprises 130 residues: Small ribosomal subunit protein uS8 (130 aa).

Belongs to the universal ribosomal protein uS8 family. In terms of assembly, part of the 30S ribosomal subunit.

One of the primary rRNA binding proteins, it binds directly to 16S rRNA central domain where it helps coordinate assembly of the platform of the 30S subunit. This Haloarcula marismortui (strain ATCC 43049 / DSM 3752 / JCM 8966 / VKM B-1809) (Halobacterium marismortui) protein is Small ribosomal subunit protein uS8.